We begin with the raw amino-acid sequence, 860 residues long: MDYLVGIFLLLCGVALPGRVAPQHTKENVPRLKLSYNEMLESSNLVTFTGLANSSGYDTFLMDGERGRLLVGAEDHVFSFDLVNINRDVKQIAWPATPSKRDECKWAGKDLRKDCSNFVRVLQSYNQTHIYICGTGAFHPICSFLEMGKRAEDNIFRLDANYFENGRGKSPYDPKMQSSSLLLDGELYSGTSADFMGRDFAIFRTLGSHHPIRTEQHDSRWLNEPRFLGIHLIPESDNPEDDKIFLFFKENAMDGEHTGKATISRIGQLCKNDMGGHRSLVNKWTTFLKAKLTCSVPGLNGIDTHFDELQDVFLMSAKDPKNPVIYAVFTTSSNIFRGSAICMYSMADIRRVFLGPYAHRDGPNYQWVPFQGRVPYPRPGTCPSKTFGGFDSTKDLPDDVITFARLHPAMYNPVQPMGGKPIVVRTNVEYQFTQLVVDRVEAEDGQYDVMFIGTDLGTVLKVVTIPRESWHDLEEVVLEEMTVFREPTPITAMELSTKQQQLYLGSDLGISQMPLHRCEVYGKACAECCLARDPYCAWDGTECSRYFPTAKRRTRRQDIRNGDPLSQCSDLHHNDDLEGYSSVEERSVYGVENSSMFLECSPKSQRALIYWQLQKPNDERKHEIVIDERLSLTGQGLLIRSLTQADSGVFLCHAVEHGFIQPLRRINLQVIPSQRVGELLLRAGTNDKDPAPKHKLWYRDFMSLLEHPDLNSVDEFCERIWKREKKPKGKKAPKVNPGTGVSIKNEKTPQTTAQSLQNPTQRAQNAPKVPNNPSVQIFPKSTGLQRSQSPGGTVSTESQSTKPDTQKASESQRAQPNQAKKGPQTPQRGPPHTAKWKQLQENKRGRNRRTHEQQRPPRSV.

An N-terminal signal peptide occupies residues 1-17 (MDYLVGIFLLLCGVALP). In terms of domain architecture, Sema spans 31-515 (RLKLSYNEML…SDLGISQMPL (485 aa)). N-linked (GlcNAc...) asparagine glycosylation occurs at N53. Residues C104 and C115 are joined by a disulfide bond. N-linked (GlcNAc...) asparagine glycosylation occurs at N126. Disulfide bonds link C133-C142, C270-C382, C294-C342, and C518-C536. The 90-residue stretch at 579 to 668 (GYSSVEERSV…FIQPLRRINL (90 aa)) folds into the Ig-like C2-type domain. N593 carries an N-linked (GlcNAc...) asparagine glycan. The cysteines at positions 652 and 717 are disulfide-linked. The interval 725–860 (KKPKGKKAPK…HEQQRPPRSV (136 aa)) is disordered. 2 stretches are compositionally biased toward polar residues: residues 748-764 (TPQT…QRAQ) and 782-818 (TGLQ…QPNQ). Residues 838–860 (QLQENKRGRNRRTHEQQRPPRSV) are compositionally biased toward basic and acidic residues.

Belongs to the semaphorin family.

It localises to the secreted. In terms of biological role, may influence outgrowth by a variety of growth cones including those of the posterior lateral line ganglion. This chain is Semaphorin-3aa (sema3aa), found in Danio rerio (Zebrafish).